A 400-amino-acid polypeptide reads, in one-letter code: MAVRWELLRRDPASAARLGRLHTPRGVIETPVFMPVGTQATVKTLNPEEVWDLGARIILSNTYHLYLRPGHDLVQEAGGLHRFMNWKGAVLTDSGGFQVFSLADLRKITEEGVQFRSHIDGSTHFLSPEKAIAVENALGADIIMAFDECTPWPCDYDYAKRSIERTARWAARCKAAHARPDEQALFGIVQGSTFADLRRQSAEEIVALDFPGYGIGGLSVGEPKELMHEMLEVQVPLLPDDRPRYLMGVGSPEDLVEGVWRGVDMFDCVLPTRIARHGTVFVPDGKMTVRNAEFARDFLPIQEGCDCYACRNFSRAYIRHLLKADEMLGLRLCSIHNLRFLVRLMEEIRAALAAGTFAEYRKAFLERWHAGEAERRERARAAGGAGHAPGPAEPLLPENR.

Asp93 functions as the Proton acceptor in the catalytic mechanism. Substrate is bound by residues 93–97 (DSGGF), Asp147, Gln190, and Gly217. The segment at 248 to 254 (GVGSPED) is RNA binding. Catalysis depends on Asp267, which acts as the Nucleophile. Residues 272–276 (TRIAR) form an RNA binding; important for wobble base 34 recognition region. Residues Cys305, Cys307, Cys310, and His336 each contribute to the Zn(2+) site. The segment at 375-400 (RRERARAAGGAGHAPGPAEPLLPENR) is disordered. Low complexity predominate over residues 388 to 400 (APGPAEPLLPENR).

The protein belongs to the queuine tRNA-ribosyltransferase family. In terms of assembly, homodimer. Within each dimer, one monomer is responsible for RNA recognition and catalysis, while the other monomer binds to the replacement base PreQ1. Requires Zn(2+) as cofactor.

It carries out the reaction 7-aminomethyl-7-carbaguanine + guanosine(34) in tRNA = 7-aminomethyl-7-carbaguanosine(34) in tRNA + guanine. The protein operates within tRNA modification; tRNA-queuosine biosynthesis. Functionally, catalyzes the base-exchange of a guanine (G) residue with the queuine precursor 7-aminomethyl-7-deazaguanine (PreQ1) at position 34 (anticodon wobble position) in tRNAs with GU(N) anticodons (tRNA-Asp, -Asn, -His and -Tyr). Catalysis occurs through a double-displacement mechanism. The nucleophile active site attacks the C1' of nucleotide 34 to detach the guanine base from the RNA, forming a covalent enzyme-RNA intermediate. The proton acceptor active site deprotonates the incoming PreQ1, allowing a nucleophilic attack on the C1' of the ribose to form the product. After dissociation, two additional enzymatic reactions on the tRNA convert PreQ1 to queuine (Q), resulting in the hypermodified nucleoside queuosine (7-(((4,5-cis-dihydroxy-2-cyclopenten-1-yl)amino)methyl)-7-deazaguanosine). This chain is Queuine tRNA-ribosyltransferase, found in Symbiobacterium thermophilum (strain DSM 24528 / JCM 14929 / IAM 14863 / T).